Here is a 942-residue protein sequence, read N- to C-terminus: Mitogen-activated protein kinase kinase kinase A (942 aa).

The PB1 domain maps to 15 to 96 (FIRIKCILGD…NPTKIISTKF (82 aa)). The disordered stretch occupies residues 107–144 (PLSSSLSPTQSLILNNNNNNNNNNNNNNNNNNNNNNNN). One can recognise a Protein kinase domain in the interval 170–429 (WQKGQILGRG…ANQLLKHPFI (260 aa)). ATP is bound by residues 176 to 184 (LGRGGYGSV) and Lys-199. Asp-297 serves as the catalytic Proton acceptor. Residues 441–486 (ISPTTTLSTNTTNTTATTTTTNNATNSNINQQQQQQQQQPPTRTQR) show a composition bias toward low complexity. The tract at residues 441-512 (ISPTTTLSTN…ISTSTSSSSS (72 aa)) is disordered. Residues 487 to 498 (VSISAGSSNNKR) are compositionally biased toward polar residues. Residues 500-512 (TPPISTSTSSSSS) are compositionally biased toward low complexity. The helical transmembrane segment at 513 to 533 (SILNNFSINIILPINLIILIF) threads the bilayer. One can recognise an F-box domain in the interval 518 to 564 (FSINIILPINLIILIFREIKPNFVNTLSRVCKHWKQIIDDDELWNKY). WD repeat units lie at residues 607 to 646 (GHDK…HHNH), 690 to 733 (GHSG…TLFT), 736 to 778 (NHQE…STLR), 780 to 825 (HTGG…KVRS), 828 to 865 (QHTE…TIST), 872 to 909 (RQKN…DSRS), and 912 to 942 (GHHE…WSID).

It belongs to the protein kinase superfamily. STE Ser/Thr protein kinase family. MAP kinase kinase kinase subfamily. Interacts with ubcB and ubpB. Mg(2+) is required as a cofactor. Post-translationally, ubcB and ubpB differentially control ubiquitination/deubiquitination and degradation in a cell-type-specific and temporally regulated manner.

It is found in the membrane. The catalysed reaction is L-seryl-[protein] + ATP = O-phospho-L-seryl-[protein] + ADP + H(+). The enzyme catalyses L-threonyl-[protein] + ATP = O-phospho-L-threonyl-[protein] + ADP + H(+). Functionally, regulates cell-type differentiation and spatial patterning, required for the proper induction and maintenance of prespore cell differentiation. This Dictyostelium discoideum (Social amoeba) protein is Mitogen-activated protein kinase kinase kinase A.